The primary structure comprises 1417 residues: MNNGILHQNYNSKKFDIIKISLASPEVIRSWSHGEVKKPETINYRTFKPERDGLFCAKIFGPIKDYECLCGKYKRLKHRGVVCERCGVEVEQAKVRRERMGHIDLVCPVVHIWYLKSLPSRIGLFLDMPLKNVEKVLYFESYIVTDPGMTPLEKKQLLTDEEYAEALENYGYEFEASMGAEAIRDLLADTDIESEIELLQAEYEESKSTAKKEKAIKRLRLLETFQASGNKPEWMVMTVLPVLPPDLRPLVPIEGGRFATSDLNDLYRRVINRNNRLKKLLDLNAPDIIVRNEKRMLQEAVDALLDNGRRGRAVTGSNKRPLKSLADMIKGKQGRFRQNLLGKRVDYSGRSVITVGPSLRLHECGLPKKMALELFKPFVYSKLRLGGHATTIKQAKRMVELEEAVVWDILETVINEHPVLLNRAPTLHRLGIQAFEPRLIEGKAIQLHPLVCAAFNADFDGDQMAVHVPLTVESQLEARVLMMSTNNILSPASGQPIITPTQDIVLGLYYITREKEGARGEGKLFSSYEDVSRAYNSGTIDIHAKIKLRIDRQVFDTKGNTYNEKGVVNTTVGRALLLNILPEGLSFSLLNKVLVKKEISKIINQAFRVLGGKATVVLADKLMYAGFKYSTLSGVSVGVDDMTIPDNKEAKIEEAEKEIKQITEQYQSSLITENERYNNIINIWSKTSDEVGASMMDAISKDTVSINGEKKEIESFNSVYMMAKSGARGSYNQMRQLAGMRGLMAKPDGTMIETAITANFREGLSVLQYFTSTHGARKGLADTALKTANAGYLTRRLVDVAQDLVVIEEDCGTDDGLMFSAIVEDGEVKVPLVERALGRTLAADVVTEKGVVLLEAGTLLDENLVELLDDNGIDMIKVRSPITCKTRRGLCAKCYGRDLARERQVNVGESVGVIAAQSIGEPGTQLTMRTFHTGGAASLGITVSDIKVKTAGKIKFKNIRTVTNKEGQEIVISRAGEIIVSDTMGRVREQHKIPMGAVVPLASGKAVEIGDVIATWDPHAQPLITDVAGKVVLEDVIDGITSKHTYDDLTGQQTIEITSISQRTTSKNLKPVVKIVDEKGAELKSIPLAVGAVLNVADDSILEVGDIVAKIPLEGSKNKDITGGLPRVAELFEARRPKDAAILSPCDGMVRLGNRDTKEKQRIEIIDKNGHIVEEILLPKSRHLVVFDGEQVSRGDVLADGPTDPHDLLKYKGLEEFADYILIEAQSVYRMQGVVINDKHIETIVRQMLRKAVILDEGDSKFVKDESIELVRILEENDKLRKQGKKEVEYELVLMGITRSSLSTESFLSAASFQETTRVLTEASINSQIDNLRGLKENVLIGRLIPTGTGLAVRKESAKIEKMREELGVEDNMVFTDLSSFNPEEISFDSIQSQKEDKDINEDIEESLRNALESLDF.

Positions 68, 70, 83, and 86 each coordinate Zn(2+). Mg(2+) is bound by residues Asp-458, Asp-460, and Asp-462. Positions 811, 884, 891, and 894 each coordinate Zn(2+).

The protein belongs to the RNA polymerase beta' chain family. As to quaternary structure, the RNAP catalytic core consists of 2 alpha, 1 beta, 1 beta' and 1 omega subunit. When a sigma factor is associated with the core the holoenzyme is formed, which can initiate transcription. Mg(2+) serves as cofactor. Zn(2+) is required as a cofactor.

It carries out the reaction RNA(n) + a ribonucleoside 5'-triphosphate = RNA(n+1) + diphosphate. Its function is as follows. DNA-dependent RNA polymerase catalyzes the transcription of DNA into RNA using the four ribonucleoside triphosphates as substrates. The polypeptide is DNA-directed RNA polymerase subunit beta' (Francisella tularensis subsp. novicida (strain U112)).